Consider the following 321-residue polypeptide: 5,10-methylenetetrahydromethanopterin reductase (321 aa).

It belongs to the mer family.

The protein localises to the cytoplasm. The catalysed reaction is 5-methyl-5,6,7,8-tetrahydromethanopterin + oxidized coenzyme F420-(gamma-L-Glu)(n) + H(+) = 5,10-methylenetetrahydromethanopterin + reduced coenzyme F420-(gamma-L-Glu)(n). The protein operates within one-carbon metabolism; methanogenesis from CO(2); methyl-coenzyme M from 5,10-methylene-5,6,7,8-tetrahydromethanopterin: step 1/2. Its function is as follows. Catalyzes the reversible reduction of methylene-H(4)MPT to methyl-H(4)MPT. This Methanothermobacter thermautotrophicus (strain ATCC 29096 / DSM 1053 / JCM 10044 / NBRC 100330 / Delta H) (Methanobacterium thermoautotrophicum) protein is 5,10-methylenetetrahydromethanopterin reductase.